The following is a 220-amino-acid chain: Large ribosomal subunit protein uL16 (220 aa).

The protein belongs to the universal ribosomal protein uL16 family. In terms of assembly, component of the small ribosomal subunit. Mature ribosomes consist of a small (40S) and a large (60S) subunit. The 40S subunit contains about 33 different proteins and 1 molecule of RNA (18S). The 60S subunit contains about 49 different proteins and 3 molecules of RNA (25S, 5.8S and 5S).

This is Large ribosomal subunit protein uL16 (RPL10) from Euphorbia esula (Leafy spurge).